Here is a 1673-residue protein sequence, read N- to C-terminus: Protein TIC 214 (1673 aa).

6 consecutive transmembrane segments (helical) span residues 32 to 52 (AGLY…ILLI), 70 to 90 (LILG…YIAF), 93 to 113 (PYTL…GNNL), 130 to 150 (LEIL…TCIF), 170 to 190 (MVFL…VLMC), and 218 to 238 (FFLV…IQSL). Composition is skewed to basic and acidic residues over residues 264–276 (LKKS…GKST) and 283–298 (SHEK…SKLE). Disordered regions lie at residues 264–302 (LKKS…NEDE), 547–611 (VVFD…YSIR), 1120–1146 (NKQS…TDNL), and 1370–1433 (QQNQ…SEDD). Residues 562–586 (DNGNIQNNSSDKTINPQNNLTNLKP) are compositionally biased toward polar residues. Positions 597-611 (TTEKEPKDDKSYSIR) are enriched in basic and acidic residues. Residues 1120 to 1135 (NKQSLQKRNSSGNSNL) show a composition bias toward polar residues. A compositionally biased stretch (low complexity) spans 1370–1379 (QQNQTTTKMN). Composition is skewed to basic and acidic residues over residues 1380-1399 (TETK…KKTE) and 1406-1423 (TKNK…KETE).

This sequence belongs to the TIC214 family. In terms of assembly, part of the Tic complex.

It is found in the plastid. The protein resides in the chloroplast inner membrane. Its function is as follows. Involved in protein precursor import into chloroplasts. May be part of an intermediate translocation complex acting as a protein-conducting channel at the inner envelope. This Cuscuta gronovii (Common dodder) protein is Protein TIC 214.